The following is a 594-amino-acid chain: UvrABC system protein C (594 aa).

In terms of domain architecture, GIY-YIG spans 13 to 99 (NSSGVYQYFD…IKQLKPKYNI (87 aa)). One can recognise a UVR domain in the interval 205-240 (DRLIKELELKMERLSSKLRFEEALIYRDRIAKIQKI).

Belongs to the UvrC family. In terms of assembly, interacts with UvrB in an incision complex.

The protein localises to the cytoplasm. Functionally, the UvrABC repair system catalyzes the recognition and processing of DNA lesions. UvrC both incises the 5' and 3' sides of the lesion. The N-terminal half is responsible for the 3' incision and the C-terminal half is responsible for the 5' incision. In Helicobacter pylori (strain P12), this protein is UvrABC system protein C.